Reading from the N-terminus, the 119-residue chain is Lamprin 1.8-10 (119 aa).

The signal sequence occupies residues 1–19 (MAATMQALLVIALLHLATA). 7 tandem repeats follow at residues 41–45 (GGLGY), 46–50 (GGLGY), 51–55 (GGLGY), 56–60 (GGLGV), 61–65 (AGLGY), 66–70 (GGLGY), and 86–90 (GGLGY). Positions 41–90 (GGLGYGGLGYGGLGYGGLGVAGLGYGGLGYPGAALGGAYTHHAALGGLGY) are 7 X 5 AA approximate repeats.

As to quaternary structure, the polymeric lamprin chains self-aggregate to form fibers and have secondary structures particularly rich in beta-sheets and in beta-turns.

The protein localises to the secreted. It is found in the extracellular space. It localises to the extracellular matrix. Functionally, self-aggregating protein that is part of the soluble form of lamprin. This is Lamprin 1.8-10 from Petromyzon marinus (Sea lamprey).